A 78-amino-acid chain; its full sequence is HssA/B-like protein 29 (78 aa).

A disordered region spans residues 1–31; that stretch reads MTLFSSITSISKTNTSSKSSLNSFSGSSLSM.

The protein belongs to the hssA/B family.

This Dictyostelium discoideum (Social amoeba) protein is HssA/B-like protein 29 (hssl29).